Reading from the N-terminus, the 110-residue chain is Large ribosomal subunit protein uL22 (110 aa).

This sequence belongs to the universal ribosomal protein uL22 family. As to quaternary structure, part of the 50S ribosomal subunit.

Its function is as follows. This protein binds specifically to 23S rRNA; its binding is stimulated by other ribosomal proteins, e.g. L4, L17, and L20. It is important during the early stages of 50S assembly. It makes multiple contacts with different domains of the 23S rRNA in the assembled 50S subunit and ribosome. Functionally, the globular domain of the protein is located near the polypeptide exit tunnel on the outside of the subunit, while an extended beta-hairpin is found that lines the wall of the exit tunnel in the center of the 70S ribosome. The protein is Large ribosomal subunit protein uL22 of Maridesulfovibrio salexigens (strain ATCC 14822 / DSM 2638 / NCIMB 8403 / VKM B-1763) (Desulfovibrio salexigens).